Consider the following 1220-residue polypeptide: DNA polymerase catalytic subunit (1220 aa).

Disordered stretches follow at residues glycine 21 to glutamine 43 and glutamine 641 to valine 691. Positions serine 646–phenylalanine 660 are enriched in polar residues.

Belongs to the DNA polymerase type-B family. Forms a complex with the ssDNA-binding protein, the DNA polymerase processivity factor, and the alkaline exonuclease. Interacts with the helicase-primase complex composed of the primase, the helicase and the primase-associated factor; this interaction may coordinate leading and lagging strand DNA synthesis at the replication fork.

It is found in the host nucleus. The catalysed reaction is DNA(n) + a 2'-deoxyribonucleoside 5'-triphosphate = DNA(n+1) + diphosphate. It carries out the reaction Endonucleolytic cleavage to 5'-phosphomonoester.. Functionally, replicates viral genomic DNA. The replication complex is composed of six viral proteins: the DNA polymerase, processivity factor, primase, primase-associated factor, helicase, and ssDNA-binding protein. Additionally, the polymerase contains an intrinsic ribonuclease H (RNase H) activity that specifically degrades RNA/DNA heteroduplexes or duplex DNA substrates in the 5' to 3' direction. Therefore, it can catalyze the excision of the RNA primers that initiate the synthesis of Okazaki fragments at a replication fork during viral DNA replication. The protein is DNA polymerase catalytic subunit of Equus caballus (Horse).